A 611-amino-acid polypeptide reads, in one-letter code: Rho-related BTB domain-containing protein 3 (611 aa).

The segment at 1–175 is rho-like; it reads MSIHIVALGN…KELGATYLEL (175 aa). BTB domains follow at residues 254–356 and 420–487; these read VDVV…QWEE and ADVV…CPAG. The segment at 420-611 is interaction with Rab9; the sequence is ADVVFEIQGA…HSRKCRCLVM (192 aa).

As to quaternary structure, interacts with RAB9A and RAB9B (at lower level compared to RAB9A-binding). Interacts with M6PRBP1/TIP47.

Its subcellular location is the golgi apparatus. Rab9-regulated ATPase required for endosome to Golgi transport. Involved in transport vesicle docking at the Golgi complex, possibly by participating in release M6PRBP1/TIP47 from vesicles to permit their efficient docking and fusion at the Golgi. Specifically binds Rab9, but not other Rab proteins. Has low intrinsic ATPase activity due to autoinhibition, which is relieved by Rab9. This chain is Rho-related BTB domain-containing protein 3 (Rhobtb3), found in Mus musculus (Mouse).